Here is a 482-residue protein sequence, read N- to C-terminus: UDP-N-acetylmuramate--L-alanine ligase (482 aa).

129-135 lines the ATP pocket; the sequence is GTHGKTT.

This sequence belongs to the MurCDEF family.

The protein resides in the cytoplasm. The enzyme catalyses UDP-N-acetyl-alpha-D-muramate + L-alanine + ATP = UDP-N-acetyl-alpha-D-muramoyl-L-alanine + ADP + phosphate + H(+). It functions in the pathway cell wall biogenesis; peptidoglycan biosynthesis. Cell wall formation. The protein is UDP-N-acetylmuramate--L-alanine ligase of Acinetobacter baumannii (strain SDF).